The primary structure comprises 332 residues: Fructose-1,6-bisphosphatase class 1 1 (332 aa).

Residues glutamate 92, aspartate 115, leucine 117, and aspartate 118 each contribute to the Mg(2+) site. Residues 118 to 121 (DGSS), asparagine 211, tyrosine 244, 262 to 264 (YLY), and lysine 274 contribute to the substrate site. Glutamate 280 lines the Mg(2+) pocket.

It belongs to the FBPase class 1 family. As to quaternary structure, homotetramer. The cofactor is Mg(2+).

It is found in the cytoplasm. It carries out the reaction beta-D-fructose 1,6-bisphosphate + H2O = beta-D-fructose 6-phosphate + phosphate. The protein operates within carbohydrate biosynthesis; gluconeogenesis. The chain is Fructose-1,6-bisphosphatase class 1 1 from Christiangramia forsetii (strain DSM 17595 / CGMCC 1.15422 / KT0803) (Gramella forsetii).